Reading from the N-terminus, the 66-residue chain is Clusterin (66 aa).

This sequence belongs to the clusterin family. Antiparallel disulfide-linked heterodimer of an alpha chain and a beta chain. Self-associates and forms higher oligomers. Interacts with a broad range of misfolded proteins, including APP, APOC2 and LYZ. Slightly acidic pH promotes interaction with misfolded proteins. Forms high-molecular weight oligomers upon interaction with misfolded proteins. Interacts with APOA1, LRP2, CLUAP1 and PON1. Interacts with the complement membrane attack complex. Interacts (via alpha chain) with XRCC6. Interacts with SYVN1, COMMD1, BTRC, CUL1 and with ubiquitin and SCF (SKP1-CUL1-F-box protein) E3 ubiquitin-protein ligase complexes. Interacts (via alpha chain) with BAX in stressed cells, where BAX undergoes a conformation change leading to association with the mitochondrial membrane. Does not interact with BAX in unstressed cells. Found in a complex with LTF, CLU, EPPIN and SEMG1. Interacts (immaturely glycosylated pre-secreted form) with HSPA5; this interaction promotes CLU stability and facilitates stress-induced CLU retrotranslocation from the secretory pathway to the mitochondria, thereby reducing stress-induced apoptosis by stabilizing mitochondrial membrane integrity. Interacts with BCL2L1; this interaction releases and activates BAX and promotes cell death. Interacts with TGFBR2 and ACVR1. Interacts (secreted form) with STMN3; this interaction may act as an important modulator during neuronal differentiation. Component of a epididymal complex at least composed of soluble form of prion protein PRNP, CLU, BPI, CES5A, MANBA and GLB1. In terms of processing, proteolytically cleaved on its way through the secretory system, probably within the Golgi lumen. Proteolytic cleavage is not necessary for its chaperone activity. All non-secreted forms are not proteolytically cleaved. Chaperone activity of uncleaved forms is dependent on a non-reducing environment. Post-translationally, polyubiquitinated, leading to proteasomal degradation. Under cellular stress, the intracellular level of cleaved form is reduced due to proteasomal degradation. Heavily N-glycosylated. About 30% of the protein mass is comprised of complex N-linked carbohydrate. Endoplasmic reticulum (ER) stress induces changes in glycosylation status and increases level of hypoglycosylated forms. Core carbohydrates are essential for chaperone activity. Non-secreted forms are hypoglycosylated or unglycosylated.

The protein localises to the secreted. It localises to the nucleus. Its subcellular location is the cytoplasm. The protein resides in the mitochondrion membrane. It is found in the cytosol. The protein localises to the microsome. It localises to the endoplasmic reticulum. Its subcellular location is the mitochondrion. The protein resides in the perinuclear region. It is found in the cytoplasmic vesicle. The protein localises to the secretory vesicle. It localises to the chromaffin granule. Functions as extracellular chaperone that prevents aggregation of non native proteins. Prevents stress-induced aggregation of blood plasma proteins. Inhibits formation of amyloid fibrils by APP, APOC2, B2M, CALCA, CSN3, SNCA and aggregation-prone LYZ variants (in vitro). Does not require ATP. Maintains partially unfolded proteins in a state appropriate for subsequent refolding by other chaperones, such as HSPA8/HSC70. Does not refold proteins by itself. Binding to cell surface receptors triggers internalization of the chaperone-client complex and subsequent lysosomal or proteasomal degradation. When secreted, protects cells against apoptosis and against cytolysis by complement: inhibits assembly of the complement membrane attack complex (MAC) by preventing polymerization of C9 pore component of the MAC complex. Intracellular forms interact with ubiquitin and SCF (SKP1-CUL1-F-box protein) E3 ubiquitin-protein ligase complexes and promote the ubiquitination and subsequent proteasomal degradation of target proteins. Promotes proteasomal degradation of COMMD1 and IKBKB. Modulates NF-kappa-B transcriptional activity. Following stress, promotes apoptosis. Inhibits apoptosis when associated with the mitochondrial membrane by interference with BAX-dependent release of cytochrome c into the cytoplasm. Plays a role in the regulation of cell proliferation. An intracellular form suppresses stress-induced apoptosis by stabilizing mitochondrial membrane integrity through interaction with HSPA5. Secreted form does not affect caspase or BAX-mediated intrinsic apoptosis and TNF-induced NF-kappa-B-activity. Secreted form act as an important modulator during neuronal differentiation through interaction with STMN3. Plays a role in the clearance of immune complexes that arise during cell injury. This chain is Clusterin (CLU), found in Ovis aries (Sheep).